The primary structure comprises 178 residues: uncharacterized protein (178 aa).

Residues Leu-7 to Glu-27 traverse the membrane as a helical segment.

The protein localises to the membrane. This is an uncharacterized protein from Methanocaldococcus jannaschii (strain ATCC 43067 / DSM 2661 / JAL-1 / JCM 10045 / NBRC 100440) (Methanococcus jannaschii).